A 308-amino-acid chain; its full sequence is Elongation factor Ts (308 aa).

The involved in Mg(2+) ion dislocation from EF-Tu stretch occupies residues 80–83; it reads TDFV.

Belongs to the EF-Ts family.

It localises to the cytoplasm. Functionally, associates with the EF-Tu.GDP complex and induces the exchange of GDP to GTP. It remains bound to the aminoacyl-tRNA.EF-Tu.GTP complex up to the GTP hydrolysis stage on the ribosome. This chain is Elongation factor Ts, found in Erythrobacter litoralis (strain HTCC2594).